The chain runs to 1933 residues: WD repeat-containing protein 81 (1933 aa).

The interval 1–643 (MAQGSRRRKV…TPCESGWTRE (643 aa)) is necessary and sufficient for the interaction with SQSTM1. Disordered regions lie at residues 305-334 (PSED…RPGC), 663-714 (SIPG…GKIV), 1038-1057 (CAFG…SGLG), 1090-1209 (QPQE…EGKE), 1517-1544 (SLRN…SCLQ), and 1565-1590 (DSQP…SRNE). Residues 314-330 (SEEKDRTGVKSEKDGEG) show a composition bias toward basic and acidic residues. In terms of domain architecture, BEACH spans 333–610 (GCPTCQKELR…IPRLLVQPIQ (278 aa)). Residues 668 to 693 (AGDQPGSSSSQASPGLLPFSAPSGSR) show a composition bias toward low complexity. Composition is skewed to polar residues over residues 1100–1112 (GQLS…SEAS) and 1131–1140 (VKSGDSSQDL). Over residues 1145–1166 (GSEEEEEEEEGCVVLEEEEQDE) the composition is skewed to acidic residues. 5 WD repeats span residues 1638–1677 (GHTG…DGTS), 1684–1724 (IYAQ…TLRT), 1776–1815 (LNPG…VLRG), 1818–1856 (AHEG…PTHH), and 1903–1933 (NFRG…RLLA).

This sequence belongs to the WD repeat WDR81 family. As to quaternary structure, interacts with WDR91; involved in early to late endosome cargo transport. Interacts with BECN1; negatively regulates the PI3 kinase/PI3K activity associated with endosomal membranes. Interacts with SQSTM1; the interaction is direct and regulates the interaction of SQSTM1 with ubiquitinated proteins. Interacts with MAP1LC3C; recruits MAP1LC3C to ubiquitinated protein aggregates in the aggrephagy process.

Its subcellular location is the early endosome membrane. The protein resides in the late endosome membrane. The protein localises to the lysosome membrane. It is found in the cytoplasmic vesicle. It localises to the autophagosome membrane. Its subcellular location is the mitochondrion. The protein resides in the cytoplasm. The protein localises to the cytosol. Functionally, functions as a negative regulator of the PI3 kinase/PI3K activity associated with endosomal membranes via BECN1, a core subunit of the PI3K complex. By modifying the phosphatidylinositol 3-phosphate/PtdInsP3 content of endosomal membranes may regulate endosome fusion, recycling, sorting and early to late endosome transport. It is for instance, required for the delivery of cargos like BST2/tetherin from early to late endosome and thereby participates indirectly to their degradation by the lysosome. May also play a role in aggrephagy, the macroautophagic degradation of ubiquitinated protein aggregates. In this process, may regulate the interaction of SQSTM1 with ubiquitinated proteins and also recruit MAP1LC3C. May also be involved in maintenance of normal mitochondrial structure and organization. This is WD repeat-containing protein 81 from Rattus norvegicus (Rat).